The primary structure comprises 154 residues: Small ribosomal subunit protein bS6 (154 aa).

Residues Asp97–Gly154 form a disordered region. 2 stretches are compositionally biased toward basic and acidic residues: residues Gln105–Glu124 and Asp135–Gly154.

Belongs to the bacterial ribosomal protein bS6 family.

Binds together with bS18 to 16S ribosomal RNA. In Methylobacterium radiotolerans (strain ATCC 27329 / DSM 1819 / JCM 2831 / NBRC 15690 / NCIMB 10815 / 0-1), this protein is Small ribosomal subunit protein bS6.